Here is a 254-residue protein sequence, read N- to C-terminus: Trans-aconitate 2-methyltransferase (254 aa).

Belongs to the methyltransferase superfamily. Tam family.

Its subcellular location is the cytoplasm. It carries out the reaction trans-aconitate + S-adenosyl-L-methionine = (E)-3-(methoxycarbonyl)pent-2-enedioate + S-adenosyl-L-homocysteine. Its function is as follows. Catalyzes the S-adenosylmethionine monomethyl esterification of trans-aconitate. This Mycobacterium sp. (strain JLS) protein is Trans-aconitate 2-methyltransferase.